Reading from the N-terminus, the 222-residue chain is Putative RING finger protein ORF118 (222 aa).

An RING-type zinc finger spans residues 78–114; that stretch reads CCICMAKNNRKEALPCQHNVCRDCYYKPMRNNCPVCN. The disordered stretch occupies residues 184–222; that stretch reads IENRIHNNNNNNYDENNPDDLPVIHPPRRRHRQTAHISI. A compositionally biased stretch (low complexity) spans 189–198; sequence HNNNNNNYDE. Over residues 209–222 the composition is skewed to basic residues; it reads PPRRRHRQTAHISI.

In Magallana gigas (Pacific oyster), this protein is Putative RING finger protein ORF118.